Here is a 420-residue protein sequence, read N- to C-terminus: Na(+)/H(+) antiporter NhaA (420 aa).

Helical transmembrane passes span 34–54, 69–89, 107–127, 141–161, 168–190, 194–213, 271–291, 301–321, 342–362, and 374–394; these read TTGG…ANLG, LTIE…IAGL, LVPI…YTLF, IPMA…GAGL, FLLT…FFST, IWWL…MQHF, WSAG…HVSG, PISL…ITLG, IIAV…MTDL, and AKAS…AMLH.

It belongs to the NhaA Na(+)/H(+) (TC 2.A.33) antiporter family.

It is found in the cell membrane. It catalyses the reaction Na(+)(in) + 2 H(+)(out) = Na(+)(out) + 2 H(+)(in). Na(+)/H(+) antiporter that extrudes sodium in exchange for external protons. This chain is Na(+)/H(+) antiporter NhaA, found in Cutibacterium acnes (strain DSM 16379 / KPA171202) (Propionibacterium acnes).